The following is a 635-amino-acid chain: 1-deoxy-D-xylulose-5-phosphate synthase (635 aa).

Thiamine diphosphate is bound by residues H77 and 118–120; that span reads GHA. D150 lines the Mg(2+) pocket. Residues 151-152, N179, Y290, and E372 each bind thiamine diphosphate; that span reads AS. Residue N179 coordinates Mg(2+).

It belongs to the transketolase family. DXPS subfamily. In terms of assembly, homodimer. It depends on Mg(2+) as a cofactor. Thiamine diphosphate is required as a cofactor.

It catalyses the reaction D-glyceraldehyde 3-phosphate + pyruvate + H(+) = 1-deoxy-D-xylulose 5-phosphate + CO2. It participates in metabolic intermediate biosynthesis; 1-deoxy-D-xylulose 5-phosphate biosynthesis; 1-deoxy-D-xylulose 5-phosphate from D-glyceraldehyde 3-phosphate and pyruvate: step 1/1. Catalyzes the acyloin condensation reaction between C atoms 2 and 3 of pyruvate and glyceraldehyde 3-phosphate to yield 1-deoxy-D-xylulose-5-phosphate (DXP). The protein is 1-deoxy-D-xylulose-5-phosphate synthase of Leptospira borgpetersenii serovar Hardjo-bovis (strain JB197).